Here is a 644-residue protein sequence, read N- to C-terminus: Neurofilament medium polypeptide (644 aa).

Residues Val-1–Gln-33 form a coil 1B region. Residues Val-1–Phe-197 form the IF rod domain. Residue Ser-11 is modified to Phosphoserine. The tract at residues Ile-34–Asp-50 is linker 12. A coil 2A region spans residues Ile-51–Gln-72. A linker 2 region spans residues Ala-73–Trp-76. The tract at residues Phe-77–Phe-197 is coil 2B. The residue at position 105 (Tyr-105) is a Phosphotyrosine. A phosphoserine mark is found at Ser-131, Ser-203, and Ser-215. The tract at residues Ser-198–Ser-643 is tail. O-linked (GlcNAc) threonine glycosylation is present at Thr-217. Phosphoserine occurs at positions 253 and 269. The tract at residues Val-270 to Val-582 is disordered. A compositionally biased stretch (acidic residues) spans Glu-274–Val-292. A Phosphoserine modification is found at Ser-298. Over residues Lys-308–Glu-328 the composition is skewed to acidic residues. A compositionally biased stretch (basic and acidic residues) spans Gly-329–Gly-350. Ser-332, Ser-340, Ser-345, and Ser-346 each carry phosphoserine. Positions Glu-351–Ala-368 are enriched in acidic residues. Thr-357 bears the Phosphothreonine mark. Over residues Lys-369–Lys-400 the composition is skewed to basic and acidic residues. Residues Ser-401, Ser-406, Ser-442, and Ser-465 each carry the phosphoserine modification. Residues Gly-422–Glu-470 show a composition bias toward basic and acidic residues. Positions Glu-474–Lys-483 are enriched in low complexity. Residues Gly-485–Glu-508 are compositionally biased toward basic and acidic residues. Phosphoserine occurs at positions 512, 550, and 566. Over residues Thr-545 to Gly-557 the composition is skewed to basic and acidic residues. A compositionally biased stretch (basic and acidic residues) spans Ala-568–Val-582.

It belongs to the intermediate filament family. In terms of assembly, forms heterodimers with NEFL; which can further hetero-oligomerize (in vitro). Forms heterodimers with INA (in vitro). In terms of processing, there are a number of repeats of the tripeptide K-S-P, NFM is phosphorylated on a number of the serines in this motif. It is thought that phosphorylation of NFM results in the formation of interfilament cross bridges that are important in the maintenance of axonal caliber. Phosphorylation seems to play a major role in the functioning of the larger neurofilament polypeptides (NF-M and NF-H), the levels of phosphorylation being altered developmentally and coincidentally with a change in the neurofilament function. Post-translationally, phosphorylated in the head and rod regions by the PKC kinase PKN1, leading to the inhibition of polymerization.

It localises to the cytoplasm. The protein resides in the cytoskeleton. Its subcellular location is the cell projection. The protein localises to the axon. In terms of biological role, neurofilaments usually contain three intermediate filament proteins: NEFL, NEFM, and NEFH which are involved in the maintenance of neuronal caliber. May additionally cooperate with the neuronal intermediate filament proteins PRPH and INA to form neuronal filamentous networks. This Oryctolagus cuniculus (Rabbit) protein is Neurofilament medium polypeptide (NEFM).